The chain runs to 1673 residues: AF4/FMR2 family member lilli (1673 aa).

Disordered regions lie at residues 1–24 (MAQQ…NNNN), 54–80 (YSQN…QQGI), 125–302 (SRSA…PPEK), 407–534 (QLPP…GAQN), 575–604 (VGTG…SNKW), 722–1086 (RLSD…INTL), 1114–1133 (QGKL…PAAP), 1141–1160 (RMTP…PART), and 1187–1315 (KLTP…MGKE). Basic and acidic residues predominate over residues 71-80 (REKIERQQGI). Composition is skewed to low complexity over residues 146–180 (SLGH…QQQQ) and 223–244 (PRTS…SGGV). A Phosphothreonine modification is found at Thr420. The segment covering 428-441 (LKTEKNHSLEKQDS) has biased composition (basic and acidic residues). Residues 443 to 454 (LENDLELSESED) show a composition bias toward acidic residues. Ser450 and Ser452 each carry phosphoserine. A compositionally biased stretch (low complexity) spans 465–486 (GNSSNSSESDSSESGSESSSKN). The segment covering 491–500 (HPNHQQHHHQ) has biased composition (basic residues). Low complexity predominate over residues 501–525 (LQQQQQQQQATMQQQQVLQQQHRSQ). Residues 577-586 (TGSGSGGTLS) are compositionally biased toward gly residues. Polar residues predominate over residues 594–604 (KTPSPTESNKW). The segment covering 724–757 (SDSGTSASGSSSSSSSSSDSAMGGEVVPMPGPGE) has biased composition (low complexity). The segment covering 775 to 788 (QPTQSQKAPPSNSV) has biased composition (polar residues). The span at 802-812 (QRQKKPRKKKA) shows a compositional bias: basic residues. A phosphoserine mark is found at Ser821 and Ser822. The a.T hook DNA-binding region spans 851-863 (KKGRGRPRKQQQS). Residues 860 to 898 (QQQSGGSGNLSSASAGSSSQTKGPTLTAAKKPLAKTPLA) are compositionally biased toward low complexity. 2 positions are modified to phosphoserine: Ser871 and Ser873. The segment covering 909–919 (SQSSSNGNTPT) has biased composition (polar residues). Composition is skewed to low complexity over residues 949–965 (SSSA…SSSS) and 993–1004 (GSGSSSPSSSGS). Residues 1011-1022 (TRSQVGSGQALA) show a composition bias toward polar residues. The span at 1034 to 1060 (SQHSQHLSSSDCSSSSGGCTAVCSSSS) shows a compositional bias: low complexity. Basic and acidic residues predominate over residues 1065–1082 (EGRREKERERKPKSDKNK). Residues 1190 to 1205 (PAQQNGHLTPKDQATN) are compositionally biased toward polar residues. Basic and acidic residues-rich tracts occupy residues 1226–1243 (EHPV…EAKF) and 1252–1282 (FQLK…EQPP). Ser1362 bears the Phosphoserine mark. Position 1364 is a phosphothreonine (Thr1364). The segment covering 1564–1583 (NTPSSISPSNSVGSQGSGSN) has biased composition (low complexity). The disordered stretch occupies residues 1564–1588 (NTPSSISPSNSVGSQGSGSNTPPGR).

Belongs to the AF4 family. In terms of assembly, component of the super elongation complex (SEC), at least composed of Ell, Cdk9, cyclin-T (CycT), lilli and ear.

It is found in the nucleus. In terms of biological role, has a role in transcriptional regulation. Acts in parallel with the Ras/MAPK and the PI3K/PKB pathways in the control of cell identity and cellular growth. Essential for regulation of the cytoskeleton and cell growth but not for cell proliferation or growth rate. Required specifically for the microtubule-based basal transport of lipid droplets. Plays a partially redundant function downstream of Raf in cell fate specification in the developing eye. Pair-rule protein that regulates embryonic cellularization, gastrulation and segmentation. The polypeptide is AF4/FMR2 family member lilli (Drosophila melanogaster (Fruit fly)).